Consider the following 178-residue polypeptide: Endothelin-2 (178 aa).

Positions 1–24 (MVAVPTAWCSVALALLLALQEGKG) are cleaved as a signal peptide. Residues 25–46 (QVAAAPDHPAPSPRARGSHLRP) constitute a propeptide that is removed on maturation. Cystine bridges form between cysteine 49–cysteine 63 and cysteine 51–cysteine 59. A propeptide spanning residues 70 to 178 (VNTPGQTAPY…RPMYPRRRKT (109 aa)) is cleaved from the precursor. The segment at 96-111 (CECSSSGDPACATFCH) is endothelin-like. The tract at residues 158–178 (ARQHQEAEREPRPMYPRRRKT) is disordered. The span at 160–169 (QHQEAEREPR) shows a compositional bias: basic and acidic residues.

Belongs to the endothelin/sarafotoxin family.

It localises to the secreted. In terms of biological role, endothelins are endothelium-derived vasoconstrictor peptides. This Mustela putorius furo (European domestic ferret) protein is Endothelin-2 (EDN2).